The primary structure comprises 339 residues: 3-isopropylmalate dehydrogenase (339 aa).

Residues Arg-87, Arg-97, Arg-124, and Asp-214 each coordinate substrate. Residues Asp-214, Asp-238, and Asp-242 each contribute to the Mg(2+) site. 274-286 is a binding site for NAD(+); the sequence is GSAPDIAGQGIAD.

This sequence belongs to the isocitrate and isopropylmalate dehydrogenases family. LeuB type 2 subfamily. As to quaternary structure, homodimer. Mg(2+) serves as cofactor. It depends on Mn(2+) as a cofactor.

The protein resides in the cytoplasm. It catalyses the reaction (2R,3S)-3-isopropylmalate + NAD(+) = 4-methyl-2-oxopentanoate + CO2 + NADH. Its pathway is amino-acid biosynthesis; L-leucine biosynthesis; L-leucine from 3-methyl-2-oxobutanoate: step 3/4. Functionally, catalyzes the oxidation of 3-carboxy-2-hydroxy-4-methylpentanoate (3-isopropylmalate) to 3-carboxy-4-methyl-2-oxopentanoate. The product decarboxylates to 4-methyl-2 oxopentanoate. The polypeptide is 3-isopropylmalate dehydrogenase (Mycobacterium marinum (strain ATCC BAA-535 / M)).